Consider the following 223-residue polypeptide: Adenylate kinase (223 aa).

10-15 (GAGKGT) contacts ATP. The tract at residues 30 to 59 (STGDILRQAVKEGTEVGKIAGELMKAGKLI) is NMP. Residues Thr31, Arg36, 57–59 (KLI), 85–88 (GFPR), and Gln92 each bind AMP. Residues 126 to 163 (GRYVCAQCGAGYHDEFKRPHKEGVCDICGSTEFKRRPD) form an LID region. Residue Arg127 coordinates ATP. 4 residues coordinate Zn(2+): Cys130, Cys133, Cys150, and Cys153. Residues Arg160 and Arg172 each coordinate AMP. Residue Leu200 participates in ATP binding.

This sequence belongs to the adenylate kinase family. As to quaternary structure, monomer.

It localises to the cytoplasm. The enzyme catalyses AMP + ATP = 2 ADP. It functions in the pathway purine metabolism; AMP biosynthesis via salvage pathway; AMP from ADP: step 1/1. In terms of biological role, catalyzes the reversible transfer of the terminal phosphate group between ATP and AMP. Plays an important role in cellular energy homeostasis and in adenine nucleotide metabolism. This Zymomonas mobilis subsp. mobilis (strain ATCC 31821 / ZM4 / CP4) protein is Adenylate kinase.